We begin with the raw amino-acid sequence, 662 residues long: Zinc finger protein 800 (662 aa).

The segment at 69 to 91 (FECKLCRSLFRGLPNLITHKKFY) adopts a C2H2-type 1; degenerate zinc-finger fold. A Glycyl lysine isopeptide (Lys-Gly) (interchain with G-Cter in SUMO2) cross-link involves residue Lys132. 2 disordered regions span residues 172 to 197 (ETSS…PPSI) and 205 to 224 (AAPT…TSDS). Residues 205–216 (AAPTEEQPQESQ) are compositionally biased toward low complexity. A C2H2-type 2 zinc finger spans residues 231 to 254 (LICCLCRKEFNSRRGVRRHIRKVH). Lys280 is covalently cross-linked (Glycyl lysine isopeptide (Lys-Gly) (interchain with G-Cter in SUMO2)). Residues 288–311 (RSCPVCCKSFATKANVRRHFDEVH) form a C2H2-type 3 zinc finger. A Phosphoserine modification is found at Ser318. Positions 319-349 (ITPDIATKPGQPLFLDSASPKKSFKTRKQKS) are disordered. Position 320 is a phosphothreonine (Thr320). At Ser337 the chain carries Phosphoserine. The segment covering 340 to 349 (KSFKTRKQKS) has biased composition (basic residues). The C2H2-type 4 zinc-finger motif lies at 357–382 (TACKCLLCKRKYSSQIMLKRHMQIVH). A disordered region spans residues 389–473 (ANSKREKGPN…AGGQQKTRKP (85 aa)). Lys392 participates in a covalent cross-link: Glycyl lysine isopeptide (Lys-Gly) (interchain with G-Cter in SUMO2). The segment covering 414 to 434 (VESSPPSITHSPQNELKGTNH) has biased composition (polar residues). Phosphoserine is present on residues Ser420, Ser424, Ser453, Ser455, Ser458, and Ser460. Residues 456–468 (PKSASPSAAGGQQ) show a composition bias toward low complexity. Residue Lys474 forms a Glycyl lysine isopeptide (Lys-Gly) (interchain with G-Cter in SUMO2) linkage. C2H2-type zinc fingers lie at residues 484-506 (LYCK…IELH) and 517-540 (YKCP…TVVH). Disordered stretches follow at residues 573–597 (RGPS…PSKK) and 633–662 (HHKK…KALV). The segment covering 575–587 (PSREEAKHNDSKQ) has biased composition (basic and acidic residues). Lys597 participates in a covalent cross-link: Glycyl lysine isopeptide (Lys-Gly) (interchain with G-Cter in SUMO2). Residues 616–638 (HRCNKCGKAFAKKTYLEHHKKTH) form a C2H2-type 7 zinc finger. Residues 651–662 (TKGRSTRSKALV) are compositionally biased toward basic residues.

The protein belongs to the krueppel C2H2-type zinc-finger protein family.

The protein localises to the nucleus. Functionally, may be involved in transcriptional regulation. This Mus musculus (Mouse) protein is Zinc finger protein 800 (Znf800).